Here is a 305-residue protein sequence, read N- to C-terminus: UDP-N-acetylenolpyruvoylglucosamine reductase 2 (305 aa).

The region spanning 33–197 (VGGKADVFVA…LEARFELEEG (165 aa)) is the FAD-binding PCMH-type domain. Arg-176 is an active-site residue. The active-site Proton donor is Ser-226. Glu-296 is an active-site residue.

Belongs to the MurB family. The cofactor is FAD.

Its subcellular location is the cytoplasm. It carries out the reaction UDP-N-acetyl-alpha-D-muramate + NADP(+) = UDP-N-acetyl-3-O-(1-carboxyvinyl)-alpha-D-glucosamine + NADPH + H(+). Its pathway is cell wall biogenesis; peptidoglycan biosynthesis. Functionally, cell wall formation. The protein is UDP-N-acetylenolpyruvoylglucosamine reductase 2 of Bacillus thuringiensis subsp. konkukian (strain 97-27).